A 497-amino-acid chain; its full sequence is Hexokinase-1 (497 aa).

A helical membrane pass occupies residues 4–24; sequence ATVGAAVIGAATVCAVAALIV. Residues 35-487 form the Hexokinase domain; sequence ARAMAILREF…SGIGAALLAA (453 aa). The tract at residues 90–228 is hexokinase small subdomain; it reads TGDEAGVFYA…GVDMRVSALV (139 aa). ADP contacts are provided by Gly-104, Thr-105, and Asn-106. Residues Thr-194, Lys-195, Asn-229, and Asp-230 each coordinate D-glucose. The interval 229-476 is hexokinase large subdomain; that stretch reads NDTVGTLAGG…TSIVFEHSND (248 aa). Thr-253 lines the ADP pocket. Residues Asn-256, Glu-284, and Glu-315 each coordinate D-glucose. An ADP-binding site is contributed by Gly-441.

This sequence belongs to the hexokinase family.

The protein localises to the plastid. Its subcellular location is the chloroplast outer membrane. The enzyme catalyses a D-hexose + ATP = a D-hexose 6-phosphate + ADP + H(+). It catalyses the reaction D-fructose + ATP = D-fructose 6-phosphate + ADP + H(+). The catalysed reaction is D-glucose + ATP = D-glucose 6-phosphate + ADP + H(+). The protein operates within carbohydrate metabolism; hexose metabolism. It participates in carbohydrate degradation; glycolysis; D-glyceraldehyde 3-phosphate and glycerone phosphate from D-glucose: step 1/4. Functionally, fructose and glucose phosphorylating enzyme. The protein is Hexokinase-1 (HXK1) of Nicotiana tabacum (Common tobacco).